The following is a 263-amino-acid chain: Hydroxyethylthiazole kinase 1 (263 aa).

Substrate is bound at residue methionine 42. 2 residues coordinate ATP: lysine 118 and threonine 164. Glycine 191 contributes to the substrate binding site.

Belongs to the Thz kinase family. It depends on Mg(2+) as a cofactor.

It carries out the reaction 5-(2-hydroxyethyl)-4-methylthiazole + ATP = 4-methyl-5-(2-phosphooxyethyl)-thiazole + ADP + H(+). It functions in the pathway cofactor biosynthesis; thiamine diphosphate biosynthesis; 4-methyl-5-(2-phosphoethyl)-thiazole from 5-(2-hydroxyethyl)-4-methylthiazole: step 1/1. Functionally, catalyzes the phosphorylation of the hydroxyl group of 4-methyl-5-beta-hydroxyethylthiazole (THZ). The chain is Hydroxyethylthiazole kinase 1 from Clostridium botulinum (strain ATCC 19397 / Type A).